The chain runs to 691 residues: MSKITADVLLKEGLPKSIHLKDLKKLNLSKMHLEMKDIDPKLFSQMVNLDELDISHNTLSELPDNLGLHNLRILNFADNHVEDVTVLKQFPNLEEVIYEDNIYLTVSDNYKVFCLLPKLRRLNNKDITSLANHVRFVNHRELSNRVEAHWDSKFKDNLPDKPSSQKINAVAKDFIKSVVNNIKYGPSSLKEFVRWKALGCSGKKRDSADDCTEGSPTKRTRIQHELQSIPLSPRKSNRLQNSPLSLTPIKRKQETSTQGTPSKSTETKSPKVALKSTPSKKQSNESSAKINGKQKLSLTPKIIQKALDNIEPLHFLQCHSKNNSCEDFKTQLWACAFEPILDSSSPKAVATCGGDSVCIIDCETGKVMKKYKVTGEEFFTLVWTTLTMIGKDEQKRKINVLAAGGKHGVVRIIHAKVSLCYGEIKAHKKAISIMCFSPKQDTFLFTGSYDKRIILWDIGVPDCDYNFRPSQLLTLDTTSVPLRMCLVPSCPDEFLVAACEDGCFAWDIRLDKKQGRRSYEVELNFPIYKEERKDNDFHVIDSLAFLNEDIIASKSVMQGSIYLWSWEKTLKTRKTKNVKKLDAVILAQMKWSSSETPYLVLSTSPERYCVFCGDEDGKIWIYDLDSCKADLQRGKLCSVVKEPTKILSWPILFSPKEKVEKTLINVVTVDPTMEYLVALTDINIVSIWKIK.

3 LRR repeats span residues 22–45 (DLKK…LFSQ), 48–69 (NLDE…LGLH), and 70–91 (NLRI…KQFP). The tract at residues 202–291 (GKKRDSADDC…QSNESSAKIN (90 aa)) is disordered. 2 stretches are compositionally biased toward polar residues: residues 255–264 (TSTQGTPSKS) and 276–291 (STPS…AKIN). WD repeat units lie at residues 426–466 (AHKK…CDYN), 476–516 (DTTS…KQGR), 535–574 (NDFH…KTRK), 593–632 (SSET…ADLQ), and 659–691 (VEKT…WKIK).

Belongs to the LRWD1 family. In terms of assembly, component of the ORC complex.

The protein localises to the nucleus. The protein resides in the chromosome. Its subcellular location is the centromere. It localises to the telomere. It is found in the cytoplasm. The protein localises to the cytoskeleton. The protein resides in the microtubule organizing center. Its subcellular location is the centrosome. It localises to the kinetochore. In terms of biological role, required for G1/S transition. Recruits and stabilizes the origin recognition complex (ORC) onto chromatin during G1 to establish pre-replication complex (preRC) and to heterochromatic sites in post-replicated cells. Binds a combination of DNA and histone methylation repressive marks on heterochromatin. Required for silencing of major satellite repeats. May be important ORC2, ORC3 and ORC4 stability. This is Leucine-rich repeat and WD repeat-containing protein 1 (lrwd1) from Xenopus tropicalis (Western clawed frog).